The primary structure comprises 255 residues: MALAKRIIPCLDVKDGRVVKGVNFIGLRDAGDPVEAAKRYNGEGADELTFLDITASSDNRDTILHIIEEVAGQVFIPLTVGGGVRTVADIRRLLNAGADKVSINTAAVTRPDLINEAAGFFGSQAIVAAVDAKAVNPENTRWEIFTHGGRNPTGLDAVEWAVEMQKRGAGEILLTGMDRDGTKQGFNLPLTRAVAEAVDIPVIASGGVGNVRHLIEGITEGKADAVLAAGIFHFGEIAIREAKRAMREAGIEVRL.

Active-site residues include Asp-12 and Asp-131.

This sequence belongs to the HisA/HisF family. Heterodimer of HisH and HisF.

The protein resides in the cytoplasm. The enzyme catalyses 5-[(5-phospho-1-deoxy-D-ribulos-1-ylimino)methylamino]-1-(5-phospho-beta-D-ribosyl)imidazole-4-carboxamide + L-glutamine = D-erythro-1-(imidazol-4-yl)glycerol 3-phosphate + 5-amino-1-(5-phospho-beta-D-ribosyl)imidazole-4-carboxamide + L-glutamate + H(+). It functions in the pathway amino-acid biosynthesis; L-histidine biosynthesis; L-histidine from 5-phospho-alpha-D-ribose 1-diphosphate: step 5/9. IGPS catalyzes the conversion of PRFAR and glutamine to IGP, AICAR and glutamate. The HisF subunit catalyzes the cyclization activity that produces IGP and AICAR from PRFAR using the ammonia provided by the HisH subunit. The sequence is that of Imidazole glycerol phosphate synthase subunit HisF from Neisseria meningitidis serogroup C (strain 053442).